A 216-amino-acid polypeptide reads, in one-letter code: 3-isopropylmalate dehydratase small subunit (216 aa).

The protein belongs to the LeuD family. LeuD type 1 subfamily. In terms of assembly, heterodimer of LeuC and LeuD.

The catalysed reaction is (2R,3S)-3-isopropylmalate = (2S)-2-isopropylmalate. The protein operates within amino-acid biosynthesis; L-leucine biosynthesis; L-leucine from 3-methyl-2-oxobutanoate: step 2/4. In terms of biological role, catalyzes the isomerization between 2-isopropylmalate and 3-isopropylmalate, via the formation of 2-isopropylmaleate. The polypeptide is 3-isopropylmalate dehydratase small subunit (Psychrobacter sp. (strain PRwf-1)).